The sequence spans 533 residues: MTTSTIKPTGGDEVPPAGVVGNVADVGVAASLTKRDSEEDTWASKGYNYINPFVHRIEIDSHIEVAKIYVLTVLLLPIRVVGCVLSLISAWMFACIGLYGMTLDDLKAKPLTGWRKQMQYMTACGMRMVYTFGSFHYVTMKGRAATAKEAPILVVAPHSSYVDSILVVASGPPSIVAKRETADIPLLGKIINYAQPIYVQREDPNSRQNTIRDIVDRARSTDDWPQVVIFAEGTCTNRTALIKFKPGAFYPGVPVQPVLLKYPNKYDTFTWTWDGPGVLRLLWLTMTQFYNRCEIEYLPVYTPSEDEVADANLYANNVREVMAKALGVPTSDYSFEDVIVMSRARDMKIPFPGDIVEIERTIEKLGLNESQRDAELCKGFLRLSNTDRLDIITFGELLQVDLKNTDLHKLFALLDHRRSGTVSLKSFLLCSLFCKLKNSDLLTFLRALIHLYSESSQQIDRESFVRLMRHAGGKLNEQKAQALFYALDTDNLGYVSFDSFVELTEKQKSSYKFLYHKSEHIRRPKAVVTTAEN.

Residues 1–79 (MTTSTIKPTG…VLTVLLLPIR (79 aa)) lie on the Cytoplasmic side of the membrane. Residues 80 to 100 (VVGCVLSLISAWMFACIGLYG) form a helical; Signal-anchor for type II membrane protein membrane-spanning segment. At 101–533 (MTLDDLKAKP…PKAVVTTAEN (433 aa)) the chain is on the lumenal side. Positions 158 to 163 (HSSYVD) match the HXXXXD motif motif. 3 EF-hand domains span residues 402-437 (LKNT…CKLK), 439-474 (SDLL…AGGK), and 475-510 (LNEQ…QKSS).

This sequence belongs to the 1-acyl-sn-glycerol-3-phosphate acyltransferase family.

It is found in the endoplasmic reticulum membrane. The protein localises to the golgi apparatus membrane. Its subcellular location is the lipid droplet. The enzyme catalyses a 1-acyl-sn-glycero-3-phosphocholine + an acyl-CoA = a 1,2-diacyl-sn-glycero-3-phosphocholine + CoA. It functions in the pathway lipid metabolism; phospholipid metabolism. In terms of biological role, acetyltransferase which mediates the conversion of 1-acyl-sn-glycero-3-phosphocholine (LPC) into phosphatidylcholine (PC). Has a calcium-independent activity. Displays a clear preference for saturated fatty acyl-CoAs, and 1-myristoyl or 1-palmitoyl LPC as acyl donors and acceptors, respectively. Involved in the regulation of lipid droplet number and size. The protein is Lysophosphatidylcholine acyltransferase of Drosophila melanogaster (Fruit fly).